An 89-amino-acid polypeptide reads, in one-letter code: Small ribosomal subunit protein uS15 (89 aa).

It belongs to the universal ribosomal protein uS15 family. In terms of assembly, part of the 30S ribosomal subunit. Forms a bridge to the 50S subunit in the 70S ribosome, contacting the 23S rRNA.

Its function is as follows. One of the primary rRNA binding proteins, it binds directly to 16S rRNA where it helps nucleate assembly of the platform of the 30S subunit by binding and bridging several RNA helices of the 16S rRNA. Functionally, forms an intersubunit bridge (bridge B4) with the 23S rRNA of the 50S subunit in the ribosome. In Clavibacter michiganensis subsp. michiganensis (strain NCPPB 382), this protein is Small ribosomal subunit protein uS15.